A 97-amino-acid polypeptide reads, in one-letter code: uncharacterized protein (97 aa).

The segment at 27-50 is disordered; sequence IGESEDKTNSRGQPATMKEDEVED.

This is an uncharacterized protein from Caldicellulosiruptor saccharolyticus (Caldocellum saccharolyticum).